A 187-amino-acid polypeptide reads, in one-letter code: Intraflagellar transport protein 22 homolog (187 aa).

Residues 10 to 17 (GPSECGKT), 65 to 69 (DCAGD), and 125 to 128 (HKPG) contribute to the GTP site.

Belongs to the small GTPase superfamily. Rab family.

This chain is Intraflagellar transport protein 22 homolog (ift22), found in Danio rerio (Zebrafish).